A 103-amino-acid chain; its full sequence is Large ribosomal subunit protein bL21 (103 aa).

The segment covering 83–92 (YRRKKGHRQP) has biased composition (basic residues). Residues 83–103 (YRRKKGHRQPFSRVTVEKIEA) form a disordered region.

Belongs to the bacterial ribosomal protein bL21 family. As to quaternary structure, part of the 50S ribosomal subunit. Contacts protein L20.

Its function is as follows. This protein binds to 23S rRNA in the presence of protein L20. The protein is Large ribosomal subunit protein bL21 of Pelotomaculum thermopropionicum (strain DSM 13744 / JCM 10971 / SI).